Reading from the N-terminus, the 117-residue chain is Large ribosomal subunit protein bL20c (117 aa).

This sequence belongs to the bacterial ribosomal protein bL20 family.

Its subcellular location is the plastid. It localises to the chloroplast. Functionally, binds directly to 23S ribosomal RNA and is necessary for the in vitro assembly process of the 50S ribosomal subunit. It is not involved in the protein synthesizing functions of that subunit. The protein is Large ribosomal subunit protein bL20c of Ceratophyllum demersum (Rigid hornwort).